We begin with the raw amino-acid sequence, 369 residues long: Serine/threonine-protein acetyltransferase HopZ1a (369 aa).

A disordered region spans residues 1–46 (MGNVCVGGSRMSHQVYSPDRADTPPRSERNTPDRRQRAAGDAERTQ). Residues 19–46 (DRADTPPRSERNTPDRRQRAAGDAERTQ) show a composition bias toward basic and acidic residues. Positions 49, 53, and 106 each coordinate 1D-myo-inositol hexakisphosphate. Residues His150 and Glu170 contribute to the active site. His150 serves as a coordination point for CoA. CoA is bound by residues Ala177 and 211 to 212 (KT). Cys216 is an active-site residue. 1D-myo-inositol hexakisphosphate-binding positions include Asn222, 226–229 (KAHK), and 289–290 (KH). Lys289 bears the N6-acetyllysine; by autocatalysis mark. A CoA-binding site is contributed by 292–295 (ASLT). 1D-myo-inositol hexakisphosphate-binding positions include 314–317 (SEGH) and Arg326. CoA contacts are provided by residues 331 to 334 (RVKR) and 344 to 348 (SNTQF). Gln358 and Arg362 together coordinate 1D-myo-inositol hexakisphosphate.

It belongs to the acetyltransferase YopJ family. In terms of assembly, interacts with host plant JAZ proteins (e.g. Glycine max JAZ1 and Arabidospis thaliana TIFY10B/JAZ2, TIFY11A/JAZ5, TIFY11B/JAZ6, TIFY5A/JAZ8 and TIFY3B/JAZ12) and triggers their degradation. Binds directly to SZE1 and SZE2 at the host plasma membrane; this interaction with a complex made of, at least, SZE1, BKN2/SZE2, ZAR1 and ZED1 triggers host immunity. The cofactor is 1D-myo-inositol hexakisphosphate. Autoacetylated at Lys-289; while autoacetylation at Lys-289 is required for virulence function to some extent, it is not essential.

The protein localises to the secreted. It localises to the host cell membrane. Its subcellular location is the host cytoplasm. It is found in the host cytoskeleton. The protein resides in the host nucleus. It carries out the reaction L-threonyl-[protein] + acetyl-CoA = O-acetyl-L-threonyl-[protein] + CoA. It catalyses the reaction L-seryl-[protein] + acetyl-CoA = O-acetyl-L-seryl-[protein] + CoA. The enzyme catalyses L-lysyl-[protein] + acetyl-CoA = N(6)-acetyl-L-lysyl-[protein] + CoA + H(+). Its activity is regulated as follows. 1D-myo-inositol hexakisphosphate activates protein-acetyltransferase activity via an allosteric mechanism: 1D-myo-inositol hexakisphosphate-binding induces a conformational rearrangement that stimulates the interaction with acetyl-CoA. Acetyltransferase activity is activated by phytic acid. Its function is as follows. Serine/threonine-protein acetyltransferase translocated into infected cells, which impairs host microtubule network and host immunity by mediating acetylation of target proteins. Blocks secretion in host cells by mediating acetylation of host tubulin, thereby impairing host microbubule network. Impairs host cell immunity by mediating acetylation of host TIFY/JAZ transcription repressors (Arabidopsis thaliana TIFY10B/JAZ2, TIFY11A/JAZ5, TIFY11B/JAZ6, TIFY5A/JAZ8, TIFY9/JAZ10 and TIFY3B/JAZ12), thereby activating host jasmonate signaling. This chain is Serine/threonine-protein acetyltransferase HopZ1a, found in Pseudomonas syringae pv. syringae.